The sequence spans 230 residues: Ribonuclease 3 (230 aa).

The RNase III domain maps to 5–125; the sequence is YSRFYNILGY…VIGAIYLDSD (121 aa). Position 40 (glutamate 40) interacts with Mg(2+). Aspartate 44 is an active-site residue. Mg(2+) contacts are provided by aspartate 111 and glutamate 114. Residue glutamate 114 is part of the active site. The 71-residue stretch at 153–223 folds into the DRBM domain; that stretch reads DSKSKLQEIL…AEKMIEMLSQ (71 aa).

It belongs to the ribonuclease III family. As to quaternary structure, homodimer. Requires Mg(2+) as cofactor.

It localises to the cytoplasm. The catalysed reaction is Endonucleolytic cleavage to 5'-phosphomonoester.. Digests double-stranded RNA. Involved in the processing of primary rRNA transcript to yield the immediate precursors to the large and small rRNAs (23S and 16S). Processes some mRNAs, and tRNAs when they are encoded in the rRNA operon. Processes pre-crRNA and tracrRNA of type II CRISPR loci if present in the organism. The sequence is that of Ribonuclease 3 from Francisella tularensis subsp. tularensis (strain WY96-3418).